Reading from the N-terminus, the 75-residue chain is Small ribosomal subunit protein bS18 (75 aa).

Ala2 carries the N-acetylalanine modification.

The protein belongs to the bacterial ribosomal protein bS18 family. As to quaternary structure, part of the 30S ribosomal subunit. Forms a tight heterodimer with protein bS6.

Functionally, binds as a heterodimer with protein bS6 to the central domain of the 16S rRNA, where it helps stabilize the platform of the 30S subunit. The chain is Small ribosomal subunit protein bS18 (rpsR) from Salmonella typhimurium (strain LT2 / SGSC1412 / ATCC 700720).